A 607-amino-acid chain; its full sequence is Oligoendopeptidase F homolog (607 aa).

Position 384 (His384) interacts with Zn(2+). Glu385 is an active-site residue. Zn(2+)-binding residues include His388 and His391.

This sequence belongs to the peptidase M3B family. Requires Zn(2+) as cofactor.

The protein is Oligoendopeptidase F homolog (pepF) of Mycoplasma genitalium (strain ATCC 33530 / DSM 19775 / NCTC 10195 / G37) (Mycoplasmoides genitalium).